Here is a 314-residue protein sequence, read N- to C-terminus: Ribosomal protein L11 methyltransferase (314 aa).

The S-adenosyl-L-methionine site is built by Thr-161, Gly-182, Asp-204, and Asn-248.

This sequence belongs to the methyltransferase superfamily. PrmA family.

Its subcellular location is the cytoplasm. The catalysed reaction is L-lysyl-[protein] + 3 S-adenosyl-L-methionine = N(6),N(6),N(6)-trimethyl-L-lysyl-[protein] + 3 S-adenosyl-L-homocysteine + 3 H(+). Its function is as follows. Methylates ribosomal protein L11. The polypeptide is Ribosomal protein L11 methyltransferase (Listeria monocytogenes serotype 4a (strain HCC23)).